Reading from the N-terminus, the 261-residue chain is Insulin-like growth factor-binding protein-related protein 1 (261 aa).

Positions 1–17 (MWIPLLLVALVVPAIRC) are cleaved as a signal peptide. Residues 18–101 (ERKCGECNPE…DPPEAMCVCL (84 aa)) form the IGFBP N-terminal domain. 8 disulfide bridges follow: C21–C45, C24–C47, C29–C48, C36–C51, C59–C82, C76–C98, C100–C118, and C107–C139. The Kazal-like domain maps to 70–141 (NRGHGPCGEY…RAMHRGPCKS (72 aa)). The Ig-like C2-type domain occupies 143–243 (PKITSPPEEA…GESSAAARVV (101 aa)). A glycan (N-linked (GlcNAc...) asparagine) is linked at N154. Cysteines 164 and 227 form a disulfide.

As to expression, expressed by the venom gland.

The protein localises to the secreted. The chain is Insulin-like growth factor-binding protein-related protein 1 from Cupiennius salei (American wandering spider).